We begin with the raw amino-acid sequence, 75 residues long: Protein B (75 aa).

The polypeptide is Protein B (Dicentrarchus labrax (European seabass)).